A 678-amino-acid chain; its full sequence is Probable metal-nicotianamine transporter YSL6 (678 aa).

14 consecutive transmembrane segments (helical) span residues 41 to 61, 65 to 85, 113 to 133, 158 to 178, 226 to 246, 279 to 299, 324 to 344, 394 to 414, 419 to 439, 467 to 487, 512 to 532, 561 to 581, 606 to 626, and 641 to 661; these read VTVR…LITH, LTVG…YFLV, CVVA…MLAM, LGWM…SLVA, ISFF…SCGF, IVNC…WPYI, VFIS…KIIY, LAGS…PMIF, WYLV…NSYG, GGVI…STAA, IGTT…WTAF, SALP…AILI, FYIG…LFVW, and IASG…ILSI.

This sequence belongs to the YSL (TC 2.A.67.2) family. As to expression, expressed in roots and leaves.

It is found in the membrane. Functionally, may be involved in the transport of nicotianamine-chelated metals. This Oryza sativa subsp. japonica (Rice) protein is Probable metal-nicotianamine transporter YSL6 (YSL6).